Reading from the N-terminus, the 365-residue chain is Pheromone M-factor receptor (365 aa).

The next 7 membrane-spanning stretches (helical) occupy residues 7–24, 31–54, 73–100, 116–133, 155–182, 204–226, and 265–283; these read FYQF…PILY, NIPC…ESAI, ITSR…DTVI, VCLS…MVPL, YTLL…VVLY, FLRL…IFMV, and VPPT…SGGW.

The protein belongs to the G-protein coupled receptor 4 family.

Its subcellular location is the membrane. Receptor for the peptide pheromone M-factor, a mating factor of S.pombe. Pheromone signaling is essential for initiation of meiosis in S.pombe; M-factor signaling alone may be sufficient. In Schizosaccharomyces pombe (strain 972 / ATCC 24843) (Fission yeast), this protein is Pheromone M-factor receptor (map3).